The primary structure comprises 137 residues: Small ribosomal subunit protein uS12 (137 aa).

The interval 1–20 (MPTTNQLVNRGRTSKVQKQN) is disordered. Position 102 is a 3-methylthioaspartic acid (D102).

The protein belongs to the universal ribosomal protein uS12 family. In terms of assembly, part of the 30S ribosomal subunit. Contacts proteins S8 and S17. May interact with IF1 in the 30S initiation complex.

In terms of biological role, with S4 and S5 plays an important role in translational accuracy. Functionally, interacts with and stabilizes bases of the 16S rRNA that are involved in tRNA selection in the A site and with the mRNA backbone. Located at the interface of the 30S and 50S subunits, it traverses the body of the 30S subunit contacting proteins on the other side and probably holding the rRNA structure together. The combined cluster of proteins S8, S12 and S17 appears to hold together the shoulder and platform of the 30S subunit. The sequence is that of Small ribosomal subunit protein uS12 from Mycoplasmopsis synoviae (strain 53) (Mycoplasma synoviae).